We begin with the raw amino-acid sequence, 238 residues long: Probable transcriptional regulatory protein SAB0618 (238 aa).

The protein belongs to the TACO1 family. YeeN subfamily.

It is found in the cytoplasm. This chain is Probable transcriptional regulatory protein SAB0618, found in Staphylococcus aureus (strain bovine RF122 / ET3-1).